The following is a 201-amino-acid chain: Dephospho-CoA kinase (201 aa).

Positions 4–201 (SVGLTGNIAS…KYLREAKIKQ (198 aa)) constitute a DPCK domain. 12 to 17 (ASGKST) contributes to the ATP binding site.

The protein belongs to the CoaE family.

Its subcellular location is the cytoplasm. It catalyses the reaction 3'-dephospho-CoA + ATP = ADP + CoA + H(+). The protein operates within cofactor biosynthesis; coenzyme A biosynthesis; CoA from (R)-pantothenate: step 5/5. In terms of biological role, catalyzes the phosphorylation of the 3'-hydroxyl group of dephosphocoenzyme A to form coenzyme A. The chain is Dephospho-CoA kinase from Legionella pneumophila (strain Paris).